The sequence spans 541 residues: Carotenoid-cleaving dioxygenase, mitochondrial (541 aa).

Fe cation-binding residues include His-188, His-248, His-319, and His-535.

Belongs to the carotenoid oxygenase family. Fe(2+) serves as cofactor. As to expression, widely expressed. Detected in heart, spleen, lung, intestine, colon, stomach, kidney, bladder, and prostate. Highly expressed in liver and testis (at protein level).

The protein localises to the mitochondrion. It carries out the reaction all-trans-beta-carotene + O2 = beta-ionone + all-trans-10'-apo-beta-carotenal. The enzyme catalyses 5-cis-lycopene + O2 = 5-cis-10'-apo-lycopenal + (3E,5E)-6,10-dimethylundeca-3,5,9-trien-2-one. It catalyses the reaction 13-cis-lycopene + O2 = 13-cis-10'-apo-lycopenal + (3E,5E)-6,10-dimethylundeca-3,5,9-trien-2-one. The catalysed reaction is lutein + O2 = (3R,6R)-hydroxy-alpha-ionone + (3R)-3-hydroxy-10'-apo-beta-carotenal. It carries out the reaction lutein + O2 = (3R,6R)-3-hydroxy-10'-apo-alpha-carotenal + (3R)-hydroxy-beta-ionone. The enzyme catalyses all-trans-zeaxanthin + 2 O2 = 4,9-dimethyldodeca-2,4,6,8,10-pentaenedial + 2 (3R)-hydroxy-beta-ionone. It catalyses the reaction all-trans-zeaxanthin + O2 = (3R)-3-hydroxy-10'-apo-beta-carotenal + (3R)-hydroxy-beta-ionone. The catalysed reaction is beta-cryptoxanthin + O2 = all-trans-10'-apo-beta-carotenal + (3R)-hydroxy-beta-ionone. It carries out the reaction all-trans-10'-apo-beta-carotenal + O2 = beta-ionone + 4,9-dimethyldodeca-2,4,6,8,10-pentaenedial. The enzyme catalyses (3R)-3-hydroxy-10'-apo-beta-carotenal + O2 = 4,9-dimethyldodeca-2,4,6,8,10-pentaenedial + (3R)-hydroxy-beta-ionone. It catalyses the reaction (3R,6R)-3-hydroxy-10'-apo-alpha-carotenal + O2 = (3R,6R)-hydroxy-alpha-ionone + 4,9-dimethyldodeca-2,4,6,8,10-pentaenedial. Functionally, broad specificity mitochondrial dioxygenase that mediates the asymmetric oxidative cleavage of carotenoids. Cleaves carotenes (pure hydrocarbon carotenoids) such as all-trans-beta-carotene and lycopene as well as xanthophylls (oxygenated carotenoids) such as zeaxanthin, lutein and beta-cryptoxanthin at both the 9,10 and the 9',10' carbon-carbon double bond. Through its function in carotenoids metabolism regulates oxidative stress and the production of important signaling molecules. The chain is Carotenoid-cleaving dioxygenase, mitochondrial from Mustela putorius furo (European domestic ferret).